The chain runs to 219 residues: Phosphatidylserine decarboxylase proenzyme (219 aa).

Serine 188 functions as the Schiff-base intermediate with substrate; via pyruvic acid in the catalytic mechanism. Residue serine 188 is modified to Pyruvic acid (Ser); by autocatalysis.

Belongs to the phosphatidylserine decarboxylase family. PSD-A subfamily. Heterodimer of a large membrane-associated beta subunit and a small pyruvoyl-containing alpha subunit. The cofactor is pyruvate. In terms of processing, is synthesized initially as an inactive proenzyme. Formation of the active enzyme involves a self-maturation process in which the active site pyruvoyl group is generated from an internal serine residue via an autocatalytic post-translational modification. Two non-identical subunits are generated from the proenzyme in this reaction, and the pyruvate is formed at the N-terminus of the alpha chain, which is derived from the carboxyl end of the proenzyme. The post-translation cleavage follows an unusual pathway, termed non-hydrolytic serinolysis, in which the side chain hydroxyl group of the serine supplies its oxygen atom to form the C-terminus of the beta chain, while the remainder of the serine residue undergoes an oxidative deamination to produce ammonia and the pyruvoyl prosthetic group on the alpha chain.

Its subcellular location is the cell membrane. It carries out the reaction a 1,2-diacyl-sn-glycero-3-phospho-L-serine + H(+) = a 1,2-diacyl-sn-glycero-3-phosphoethanolamine + CO2. It participates in phospholipid metabolism; phosphatidylethanolamine biosynthesis; phosphatidylethanolamine from CDP-diacylglycerol: step 2/2. Its function is as follows. Catalyzes the formation of phosphatidylethanolamine (PtdEtn) from phosphatidylserine (PtdSer). This chain is Phosphatidylserine decarboxylase proenzyme, found in Geobacter sp. (strain M21).